Here is a 79-residue protein sequence, read N- to C-terminus: uncharacterized protein (79 aa).

This is an uncharacterized protein from Escherichia coli (strain K12).